Consider the following 283-residue polypeptide: 2,3,4,5-tetrahydropyridine-2,6-dicarboxylate N-succinyltransferase (283 aa).

Residues Arg-107 and Asp-144 each contribute to the substrate site.

This sequence belongs to the transferase hexapeptide repeat family. In terms of assembly, homotrimer.

Its subcellular location is the cytoplasm. The enzyme catalyses (S)-2,3,4,5-tetrahydrodipicolinate + succinyl-CoA + H2O = (S)-2-succinylamino-6-oxoheptanedioate + CoA. It functions in the pathway amino-acid biosynthesis; L-lysine biosynthesis via DAP pathway; LL-2,6-diaminopimelate from (S)-tetrahydrodipicolinate (succinylase route): step 1/3. The protein is 2,3,4,5-tetrahydropyridine-2,6-dicarboxylate N-succinyltransferase of Rhodospirillum rubrum (strain ATCC 11170 / ATH 1.1.1 / DSM 467 / LMG 4362 / NCIMB 8255 / S1).